The sequence spans 303 residues: uncharacterized protein (303 aa).

The next 6 membrane-spanning stretches (helical) occupy residues 12 to 32 (GLPI…SGIL), 81 to 101 (ISSV…VLEF), 117 to 137 (ALAG…FDVI), 174 to 194 (CIAM…TCMS), 208 to 228 (IISG…LDVV), and 265 to 286 (FFKG…SWAA). 3 Solcar repeats span residues 17–105 (SPMY…FKSK), 111–195 (DRPL…CMSF), and 206–293 (SHII…GKEI).

This sequence belongs to the mitochondrial carrier (TC 2.A.29) family.

The protein resides in the mitochondrion inner membrane. This is an uncharacterized protein from Schizosaccharomyces pombe (strain 972 / ATCC 24843) (Fission yeast).